We begin with the raw amino-acid sequence, 275 residues long: 2-dehydro-3-deoxyphosphooctonate aldolase (275 aa).

Belongs to the KdsA family.

It localises to the cytoplasm. It carries out the reaction D-arabinose 5-phosphate + phosphoenolpyruvate + H2O = 3-deoxy-alpha-D-manno-2-octulosonate-8-phosphate + phosphate. It participates in carbohydrate biosynthesis; 3-deoxy-D-manno-octulosonate biosynthesis; 3-deoxy-D-manno-octulosonate from D-ribulose 5-phosphate: step 2/3. It functions in the pathway bacterial outer membrane biogenesis; lipopolysaccharide biosynthesis. The polypeptide is 2-dehydro-3-deoxyphosphooctonate aldolase (Francisella tularensis subsp. mediasiatica (strain FSC147)).